Reading from the N-terminus, the 103-residue chain is Small ribosomal subunit protein uS14c (103 aa).

A disordered region spans residues 34-56 (KVSPLSLSEKTKMREKLQSLPRN).

Belongs to the universal ribosomal protein uS14 family. In terms of assembly, part of the 30S ribosomal subunit.

It is found in the plastid. It localises to the chloroplast. Functionally, binds 16S rRNA, required for the assembly of 30S particles. The chain is Small ribosomal subunit protein uS14c from Triticum aestivum (Wheat).